A 1007-amino-acid polypeptide reads, in one-letter code: Zinc finger CCCH domain-containing protein 4 (1007 aa).

The Helicase ATP-binding domain occupies 28–192 (VEKVKGNRVT…FRDLGRGERV (165 aa)). 41–48 (GDTGCGKS) provides a ligand contact to ATP. The short motif at 139 to 142 (DEIH) is the DEAH box element. The 171-residue stretch at 250-420 (LIHRLLLHIH…EQVLMICCAE (171 aa)) folds into the Helicase C-terminal domain. C3H1-type zinc fingers lie at residues 723 to 750 (ALEN…HSSR) and 751 to 778 (APRP…HDSG).

The protein is Zinc finger CCCH domain-containing protein 4 of Oryza sativa subsp. japonica (Rice).